We begin with the raw amino-acid sequence, 249 residues long: tRNA (guanine-N(1)-)-methyltransferase (249 aa).

Residues glycine 113 and 133–138 (VGDYVL) contribute to the S-adenosyl-L-methionine site.

It belongs to the RNA methyltransferase TrmD family. Homodimer.

The protein localises to the cytoplasm. The catalysed reaction is guanosine(37) in tRNA + S-adenosyl-L-methionine = N(1)-methylguanosine(37) in tRNA + S-adenosyl-L-homocysteine + H(+). Functionally, specifically methylates guanosine-37 in various tRNAs. This Tolumonas auensis (strain DSM 9187 / NBRC 110442 / TA 4) protein is tRNA (guanine-N(1)-)-methyltransferase.